Reading from the N-terminus, the 1330-residue chain is ESX-3 secretion system protein EccC3 (1330 aa).

A run of 2 helical transmembrane segments spans residues 43–63 and 65–85; these read LPYL…ATGM and VISP…TALY. 3 consecutive FtsK domains span residues 456-662, 811-1000, and 1090-1280; these read GEPL…SVSR, RDPL…RDSN, and LAPV…ADSG. Residues 479–486, 829–836, and 1107–1114 contribute to the ATP site; these read GMTGSGKS, GGPKSGKS, and GDARSGKT.

In terms of assembly, part of the ESX-3 / type VII secretion system (T7SS), which is composed of cytosolic and membrane components. The ESX-3 membrane complex is composed of EccB3, EccC3, EccD3 and EccE3.

It is found in the cell inner membrane. Its function is as follows. Part of the ESX-3 specialized secretion system, which is important for iron and zinc uptake or homeostasis. This is ESX-3 secretion system protein EccC3 from Mycobacterium tuberculosis (strain ATCC 25618 / H37Rv).